The primary structure comprises 400 residues: Bifunctional enzyme IspD/IspF (400 aa).

Positions 1–244 (MSHRVLGTER…LLKERDKMDI (244 aa)) are 2-C-methyl-D-erythritol 4-phosphate cytidylyltransferase. The tract at residues 245-400 (RTGNGYDVHR…ALATVTLVRT (156 aa)) is 2-C-methyl-D-erythritol 2,4-cyclodiphosphate synthase. A divalent metal cation-binding residues include D251 and H253. 4-CDP-2-C-methyl-D-erythritol 2-phosphate contacts are provided by residues 251–253 (DVH) and 277–278 (HS). Residue H285 coordinates a divalent metal cation. Residues 299-301 (DIG), 375-378 (TTSE), F382, and R385 contribute to the 4-CDP-2-C-methyl-D-erythritol 2-phosphate site.

The protein in the N-terminal section; belongs to the IspD/TarI cytidylyltransferase family. IspD subfamily. In the C-terminal section; belongs to the IspF family. The cofactor is a divalent metal cation.

It carries out the reaction 2-C-methyl-D-erythritol 4-phosphate + CTP + H(+) = 4-CDP-2-C-methyl-D-erythritol + diphosphate. It catalyses the reaction 4-CDP-2-C-methyl-D-erythritol 2-phosphate = 2-C-methyl-D-erythritol 2,4-cyclic diphosphate + CMP. The protein operates within isoprenoid biosynthesis; isopentenyl diphosphate biosynthesis via DXP pathway; isopentenyl diphosphate from 1-deoxy-D-xylulose 5-phosphate: step 2/6. It functions in the pathway isoprenoid biosynthesis; isopentenyl diphosphate biosynthesis via DXP pathway; isopentenyl diphosphate from 1-deoxy-D-xylulose 5-phosphate: step 4/6. Functionally, bifunctional enzyme that catalyzes the formation of 4-diphosphocytidyl-2-C-methyl-D-erythritol from CTP and 2-C-methyl-D-erythritol 4-phosphate (MEP) (IspD), and catalyzes the conversion of 4-diphosphocytidyl-2-C-methyl-D-erythritol 2-phosphate (CDP-ME2P) to 2-C-methyl-D-erythritol 2,4-cyclodiphosphate (ME-CPP) with a corresponding release of cytidine 5-monophosphate (CMP) (IspF). The chain is Bifunctional enzyme IspD/IspF from Dinoroseobacter shibae (strain DSM 16493 / NCIMB 14021 / DFL 12).